A 744-amino-acid chain; its full sequence is Kinesin-like protein KIF2A (744 aa).

Positions 66-186 are disordered; it reads LVPDEEIEPS…QQELREKRAQ (121 aa). Ser75 is subject to Phosphoserine. Phosphothreonine occurs at positions 78 and 97. Ser100 is modified (phosphoserine). The residue at position 102 (Lys102) is an N6-acetyllysine. Residues 123-140 are compositionally biased toward polar residues; it reads FPEQSSSAQQNGSVSDIS. Residues Ser135 and Ser140 each carry the phosphoserine modification. A coiled-coil region spans residues 154–187; the sequence is RRKSNCVKEVEKLQEKREKRRLQQQELREKRAQD. Basic and acidic residues predominate over residues 159 to 186; that stretch reads CVKEVEKLQEKREKRRLQQQELREKRAQ. In terms of domain architecture, Kinesin motor spans 223-553; the sequence is RICVCVRKRP…LRYANRVKEF (331 aa). 313 to 320 contributes to the ATP binding site; the sequence is GQTGSGKT. A coiled-coil region spans residues 698–737; that stretch reads ATQLEAILEQKIDILTELRDKVKSFRAALQEEEQASKQIN.

This sequence belongs to the TRAFAC class myosin-kinesin ATPase superfamily. Kinesin family. MCAK/KIF2 subfamily. In terms of assembly, interacts with AURKA and PLK1. Interacts with PSRC1. Interacts with MCRS1; the interaction enhances recruitment of KIF2A to the minus ends of spindle microtubules which promotes chromosome alignment.

It is found in the cytoplasm. The protein localises to the cytoskeleton. The protein resides in the microtubule organizing center. Its subcellular location is the centrosome. It localises to the spindle pole. It is found in the spindle. Plus end-directed microtubule-dependent motor required for normal brain development. May regulate microtubule dynamics during axonal growth. Required for normal progression through mitosis. Required for normal congress of chromosomes at the metaphase plate. Required for normal spindle dynamics during mitosis. Promotes spindle turnover. Implicated in formation of bipolar mitotic spindles. Has microtubule depolymerization activity. This Pongo abelii (Sumatran orangutan) protein is Kinesin-like protein KIF2A.